Here is a 367-residue protein sequence, read N- to C-terminus: GTP cyclohydrolase FolE2 (367 aa).

It belongs to the GTP cyclohydrolase IV family.

It catalyses the reaction GTP + H2O = 7,8-dihydroneopterin 3'-triphosphate + formate + H(+). It functions in the pathway cofactor biosynthesis; 7,8-dihydroneopterin triphosphate biosynthesis; 7,8-dihydroneopterin triphosphate from GTP: step 1/1. Converts GTP to 7,8-dihydroneopterin triphosphate. The polypeptide is GTP cyclohydrolase FolE2 (Ruegeria pomeroyi (strain ATCC 700808 / DSM 15171 / DSS-3) (Silicibacter pomeroyi)).